Here is a 243-residue protein sequence, read N- to C-terminus: Phosphoribosylaminoimidazole-succinocarboxamide synthase (243 aa).

It belongs to the SAICAR synthetase family.

The catalysed reaction is 5-amino-1-(5-phospho-D-ribosyl)imidazole-4-carboxylate + L-aspartate + ATP = (2S)-2-[5-amino-1-(5-phospho-beta-D-ribosyl)imidazole-4-carboxamido]succinate + ADP + phosphate + 2 H(+). It functions in the pathway purine metabolism; IMP biosynthesis via de novo pathway; 5-amino-1-(5-phospho-D-ribosyl)imidazole-4-carboxamide from 5-amino-1-(5-phospho-D-ribosyl)imidazole-4-carboxylate: step 1/2. The sequence is that of Phosphoribosylaminoimidazole-succinocarboxamide synthase from Prochlorococcus marinus (strain MIT 9211).